A 550-amino-acid polypeptide reads, in one-letter code: Hydroxylamine reductase (550 aa).

[4Fe-4S] cluster is bound by residues C7, C10, C19, and C25. Residues H244, E268, C312, C405, C433, C458, E493, and K495 each coordinate hybrid [4Fe-2O-2S] cluster. At C405 the chain carries Cysteine persulfide.

Belongs to the HCP family. [4Fe-4S] cluster is required as a cofactor. It depends on hybrid [4Fe-2O-2S] cluster as a cofactor.

The protein localises to the cytoplasm. It catalyses the reaction A + NH4(+) + H2O = hydroxylamine + AH2 + H(+). In terms of biological role, catalyzes the reduction of hydroxylamine to form NH(3) and H(2)O. This Porphyromonas gingivalis (strain ATCC BAA-308 / W83) protein is Hydroxylamine reductase.